The primary structure comprises 1177 residues: DNA-directed RNA polymerase subunit beta (1177 aa).

The span at Asp1147 to Asp1161 shows a compositional bias: acidic residues. Residues Asp1147 to Glu1177 are disordered. Basic and acidic residues predominate over residues His1162–Glu1177.

This sequence belongs to the RNA polymerase beta chain family. The RNAP catalytic core consists of 2 alpha, 1 beta, 1 beta' and 1 omega subunit. When a sigma factor is associated with the core the holoenzyme is formed, which can initiate transcription.

It catalyses the reaction RNA(n) + a ribonucleoside 5'-triphosphate = RNA(n+1) + diphosphate. In terms of biological role, DNA-dependent RNA polymerase catalyzes the transcription of DNA into RNA using the four ribonucleoside triphosphates as substrates. The chain is DNA-directed RNA polymerase subunit beta from Bacillus anthracis (strain A0248).